A 326-amino-acid polypeptide reads, in one-letter code: L-carnitine dehydrogenase (326 aa).

19–24 (GTGVIG) is a binding site for NAD(+).

This sequence belongs to the 3-hydroxyacyl-CoA dehydrogenase family. L-carnitine dehydrogenase subfamily. In terms of assembly, homodimer.

It is found in the cytoplasm. It catalyses the reaction carnitine + NAD(+) = 3-dehydrocarnitine + NADH + H(+). It functions in the pathway amine and polyamine metabolism; carnitine metabolism. Catalyzes the NAD(+)-dependent oxidation of L-carnitine to 3-dehydrocarnitine. The polypeptide is L-carnitine dehydrogenase (Bacillus cereus (strain ZK / E33L)).